The primary structure comprises 452 residues: Ribosomal protein uS12 methylthiotransferase RimO (452 aa).

In terms of domain architecture, MTTase N-terminal spans 3 to 122; the sequence is LTVGLISLGC…LPEIITQVMD (120 aa). 6 residues coordinate [4Fe-4S] cluster: C12, C48, C85, C162, C166, and C169. The region spanning 148-392 is the Radical SAM core domain; the sequence is LTPPHTAYIK…TLLLARLASE (245 aa). Residues 395–452 enclose the TRAM domain; sequence QEQIGRQIRVLVDAPGVARTEWDAPDIDGTVSVPLTLPVGQFATVTVTDAVAYELTAE.

Belongs to the methylthiotransferase family. RimO subfamily. [4Fe-4S] cluster is required as a cofactor.

It localises to the cytoplasm. It carries out the reaction L-aspartate(89)-[ribosomal protein uS12]-hydrogen + (sulfur carrier)-SH + AH2 + 2 S-adenosyl-L-methionine = 3-methylsulfanyl-L-aspartate(89)-[ribosomal protein uS12]-hydrogen + (sulfur carrier)-H + 5'-deoxyadenosine + L-methionine + A + S-adenosyl-L-homocysteine + 2 H(+). Catalyzes the methylthiolation of an aspartic acid residue of ribosomal protein uS12. The polypeptide is Ribosomal protein uS12 methylthiotransferase RimO (Akkermansia muciniphila (strain ATCC BAA-835 / DSM 22959 / JCM 33894 / BCRC 81048 / CCUG 64013 / CIP 107961 / Muc)).